We begin with the raw amino-acid sequence, 185 residues long: Ribose 1,5-bisphosphate phosphokinase PhnN (185 aa).

Position 13–20 (13–20 (GPSGAGKD)) interacts with ATP.

It belongs to the ribose 1,5-bisphosphokinase family.

The catalysed reaction is alpha-D-ribose 1,5-bisphosphate + ATP = 5-phospho-alpha-D-ribose 1-diphosphate + ADP. It participates in metabolic intermediate biosynthesis; 5-phospho-alpha-D-ribose 1-diphosphate biosynthesis; 5-phospho-alpha-D-ribose 1-diphosphate from D-ribose 5-phosphate (route II): step 3/3. In terms of biological role, catalyzes the phosphorylation of ribose 1,5-bisphosphate to 5-phospho-D-ribosyl alpha-1-diphosphate (PRPP). This chain is Ribose 1,5-bisphosphate phosphokinase PhnN, found in Chromobacterium violaceum (strain ATCC 12472 / DSM 30191 / JCM 1249 / CCUG 213 / NBRC 12614 / NCIMB 9131 / NCTC 9757 / MK).